We begin with the raw amino-acid sequence, 286 residues long: Putative WUSCHEL-related homeobox 2 (286 aa).

Residues 1–25 (MAPAVQQQQSGGGGGSTGAAAVGST) form a disordered region. The segment at residues 23–87 (GSTTRWCPTP…NHKARDRQKL (65 aa)) is a DNA-binding region (homeobox; WUS-type).

This sequence belongs to the WUS homeobox family.

It is found in the nucleus. Transcription factor which may be involved in developmental processes. The sequence is that of Putative WUSCHEL-related homeobox 2 (WOX2) from Oryza sativa subsp. japonica (Rice).